A 371-amino-acid polypeptide reads, in one-letter code: Partitioning defective 6 homolog beta (371 aa).

2 positions are modified to phosphoserine: Ser-10 and Ser-11. The region spanning 16–96 (TMEVKSKFGA…PLLRIFIQKK (81 aa)) is the PB1 domain. Residues 126-253 (RKKPHIVISM…ITVRPANQRN (128 aa)) are interaction with PARD3 and CDC42. Residues 133-150 (ISMPQDFRPVSSIIDVDI) enclose the Pseudo-CRIB domain. The PDZ domain maps to 157-250 (RVRLYKYGTE…NLIITVRPAN (94 aa)). Disordered regions lie at residues 253 to 273 (NNVV…DNSL) and 326 to 371 (FESG…IITL). A compositionally biased stretch (polar residues) spans 326-340 (FESGQNGFSPPQDTS). Over residues 352–363 (LESRAPDQKLLE) the composition is skewed to basic and acidic residues.

Belongs to the PAR6 family. Interacts with PARD3. Interacts with GTP-bound forms of CDC42, RHOQ/TC10 and RAC1. Interacts with the N-terminal part of PRKCI and PRKCZ. Part of a complex with PARD3, CDC42 or RAC1 and PRKCI or PRKCZ. Part of a complex with LLGL1 and PRKCI. Interacts with ALS2CR19. Interacts with ECT2. Interacts with PALS1. As to expression, expressed in pancreas and in both adult and fetal kidney. Weakly expressed in placenta and lung. Not expressed in other tissues.

It localises to the cytoplasm. The protein localises to the cell membrane. It is found in the cell junction. The protein resides in the tight junction. Functionally, adapter protein involved in asymmetrical cell division and cell polarization processes. Probably involved in formation of epithelial tight junctions. Association with PARD3 may prevent the interaction of PARD3 with F11R/JAM1, thereby preventing tight junction assembly. The PARD6-PARD3 complex links GTP-bound Rho small GTPases to atypical protein kinase C proteins. In Mus musculus (Mouse), this protein is Partitioning defective 6 homolog beta (Pard6b).